A 107-amino-acid chain; its full sequence is MDEKWRLSKKDALAASCSSSSTSSKSKFSRSFSTSASSSKAPAFVRSSSTKCSVPSSSSSSISRSSSKKEKGSITQKYSSLAKEQKGRFYIMRRCVAMLVCWHKHDS.

Over residues 1–12 (MDEKWRLSKKDA) the composition is skewed to basic and acidic residues. The interval 1–79 (MDEKWRLSKK…EKGSITQKYS (79 aa)) is disordered. Residues 9 to 29 (KKDALAASCSSSSTSSKSKFS) form a helical membrane-spanning segment. Residues 13 to 65 (LAASCSSSSTSSKSKFSRSFSTSASSSKAPAFVRSSSTKCSVPSSSSSSISRS) are compositionally biased toward low complexity. The required for DVL/RTFL small polypeptide activity stretch occupies residues 73 to 104 (SITQKYSSLAKEQKGRFYIMRRCVAMLVCWHK).

It belongs to the DVL/RTFL small polypeptides family.

It localises to the cell membrane. Functionally, small polypeptide acting as a regulatory molecule which coordinates cellular responses required for differentiation, growth and development, probably by restricting polar cell proliferation in lateral organs and coordinating socket cell recruitment and differentiation at trichome sites. This Arabidopsis thaliana (Mouse-ear cress) protein is Small polypeptide DEVIL 9.